The following is a 424-amino-acid chain: UPF0761 membrane protein Smal_0716 (424 aa).

6 helical membrane-spanning segments follow: residues 48–68, 101–121, 144–164, 181–201, 216–236, and 251–271; these read VFAL…FPVF, SAGQ…LITL, FLVY…SLAV, WLAD…CITL, AVPG…GIGA, and VAFV…VLLG.

Belongs to the UPF0761 family.

The protein localises to the cell inner membrane. The polypeptide is UPF0761 membrane protein Smal_0716 (Stenotrophomonas maltophilia (strain R551-3)).